The sequence spans 368 residues: 3-dehydroquinate synthase (368 aa).

NAD(+) contacts are provided by residues 69–74 (DGEAYK), 103–107 (GVIGD), 127–128 (TT), Lys-140, and Lys-149. Zn(2+) contacts are provided by Glu-182, His-245, and His-262.

This sequence belongs to the sugar phosphate cyclases superfamily. Dehydroquinate synthase family. Co(2+) serves as cofactor. Zn(2+) is required as a cofactor. It depends on NAD(+) as a cofactor.

The protein resides in the cytoplasm. The enzyme catalyses 7-phospho-2-dehydro-3-deoxy-D-arabino-heptonate = 3-dehydroquinate + phosphate. The protein operates within metabolic intermediate biosynthesis; chorismate biosynthesis; chorismate from D-erythrose 4-phosphate and phosphoenolpyruvate: step 2/7. Catalyzes the conversion of 3-deoxy-D-arabino-heptulosonate 7-phosphate (DAHP) to dehydroquinate (DHQ). This chain is 3-dehydroquinate synthase, found in Pseudomonas aeruginosa (strain UCBPP-PA14).